Consider the following 226-residue polypeptide: 2-C-methyl-D-erythritol 4-phosphate cytidylyltransferase (226 aa).

It belongs to the IspD/TarI cytidylyltransferase family. IspD subfamily.

The catalysed reaction is 2-C-methyl-D-erythritol 4-phosphate + CTP + H(+) = 4-CDP-2-C-methyl-D-erythritol + diphosphate. Its pathway is isoprenoid biosynthesis; isopentenyl diphosphate biosynthesis via DXP pathway; isopentenyl diphosphate from 1-deoxy-D-xylulose 5-phosphate: step 2/6. Catalyzes the formation of 4-diphosphocytidyl-2-C-methyl-D-erythritol from CTP and 2-C-methyl-D-erythritol 4-phosphate (MEP). This is 2-C-methyl-D-erythritol 4-phosphate cytidylyltransferase from Clostridium beijerinckii (strain ATCC 51743 / NCIMB 8052) (Clostridium acetobutylicum).